We begin with the raw amino-acid sequence, 224 residues long: Ribose-5-phosphate isomerase A 1 (224 aa).

Residues 29 to 32 (SGST), 85 to 88 (DGAD), and 98 to 101 (KGGG) contribute to the substrate site. Catalysis depends on glutamate 107, which acts as the Proton acceptor. Lysine 125 contacts substrate.

Belongs to the ribose 5-phosphate isomerase family. As to quaternary structure, homodimer.

It catalyses the reaction aldehydo-D-ribose 5-phosphate = D-ribulose 5-phosphate. The protein operates within carbohydrate degradation; pentose phosphate pathway; D-ribose 5-phosphate from D-ribulose 5-phosphate (non-oxidative stage): step 1/1. Its function is as follows. Catalyzes the reversible conversion of ribose-5-phosphate to ribulose 5-phosphate. The chain is Ribose-5-phosphate isomerase A 1 from Oceanobacillus iheyensis (strain DSM 14371 / CIP 107618 / JCM 11309 / KCTC 3954 / HTE831).